Consider the following 142-residue polypeptide: MLTSEQIMGLLPHRYPFALVDRVVLHEPGQRAVAIKNVTLNEPQFQGHFPGRPLMPGVLIVEAMAQVGGLIVAQMPDLPKGLFVFAGIDAVRFRRPVVPGDQLTISCELLSLKRQRFGKVRGEARVEGQLVCSGELMFSLVD.

The active site involves histidine 48.

It belongs to the thioester dehydratase family. FabZ subfamily.

Its subcellular location is the cytoplasm. The enzyme catalyses a (3R)-hydroxyacyl-[ACP] = a (2E)-enoyl-[ACP] + H2O. Involved in unsaturated fatty acids biosynthesis. Catalyzes the dehydration of short chain beta-hydroxyacyl-ACPs and long chain saturated and unsaturated beta-hydroxyacyl-ACPs. In Prochlorococcus marinus (strain MIT 9313), this protein is 3-hydroxyacyl-[acyl-carrier-protein] dehydratase FabZ.